Reading from the N-terminus, the 125-residue chain is Small ribosomal subunit protein uS13 (125 aa).

Residues 95-125 (GLPVNGQRTRTNARTRKGGKKTVANKKKVTK) form a disordered region. Over residues 105 to 125 (TNARTRKGGKKTVANKKKVTK) the composition is skewed to basic residues.

This sequence belongs to the universal ribosomal protein uS13 family. In terms of assembly, part of the 30S ribosomal subunit. Forms a loose heterodimer with protein S19. Forms two bridges to the 50S subunit in the 70S ribosome.

Located at the top of the head of the 30S subunit, it contacts several helices of the 16S rRNA. In the 70S ribosome it contacts the 23S rRNA (bridge B1a) and protein L5 of the 50S subunit (bridge B1b), connecting the 2 subunits; these bridges are implicated in subunit movement. Contacts the tRNAs in the A and P-sites. The protein is Small ribosomal subunit protein uS13 of Leptospira borgpetersenii serovar Hardjo-bovis (strain L550).